The chain runs to 166 residues: Ribosome biogenesis regulatory protein homolog (166 aa).

A phosphoserine mark is found at serine 34 and serine 64. Positions 144-166 (KEKKLTSKQVRNTSKKIKRSRRH) are disordered. Residues 156–166 (TSKKIKRSRRH) show a composition bias toward basic residues.

The protein belongs to the RRS1 family. As to quaternary structure, component of a hexameric 5S RNP precursor complex, composed of 5S RNA, rrs1, rpf2, rpl5a/rpl5b, rpl11a/rpl11b and syo1; this complex acts as a precursor for ribosome assembly. Interacts with sad1.

It is found in the nucleus. The protein resides in the nucleolus. In terms of biological role, involved in ribosomal large subunit assembly. The protein is Ribosome biogenesis regulatory protein homolog of Schizosaccharomyces pombe (strain 972 / ATCC 24843) (Fission yeast).